The primary structure comprises 462 residues: ATP synthase subunit beta (462 aa).

152-159 (GGAGVGKT) provides a ligand contact to ATP.

This sequence belongs to the ATPase alpha/beta chains family. In terms of assembly, F-type ATPases have 2 components, CF(1) - the catalytic core - and CF(0) - the membrane proton channel. CF(1) has five subunits: alpha(3), beta(3), gamma(1), delta(1), epsilon(1). CF(0) has three main subunits: a(1), b(2) and c(9-12). The alpha and beta chains form an alternating ring which encloses part of the gamma chain. CF(1) is attached to CF(0) by a central stalk formed by the gamma and epsilon chains, while a peripheral stalk is formed by the delta and b chains.

The protein localises to the cell inner membrane. It catalyses the reaction ATP + H2O + 4 H(+)(in) = ADP + phosphate + 5 H(+)(out). Functionally, produces ATP from ADP in the presence of a proton gradient across the membrane. The catalytic sites are hosted primarily by the beta subunits. The polypeptide is ATP synthase subunit beta (Shewanella amazonensis (strain ATCC BAA-1098 / SB2B)).